Reading from the N-terminus, the 1604-residue chain is MESQQLSQHSPISHGSACASVTSKEVHTNQDPLDVSASKTEECEKASTKANSQQTTTPASSAVPENPHHASPQPASVPPPQNGPYPQQCMMTQNQANPSGWSFYGHPSMIPYTPYQMSPMYFPPGPQSQFPQYPSSVGTPLSTPSPESGNTFTDSSSADSDMTSTKKYVRPPPMLTSPNDFPNWVKTYIKFLQNSNLGGIIPTVNGKPVRQITDDELTFLYNTFQIFAPSQFLPTWVKDILSVDYTDIMKILSKSIEKMQSDTQEANDIVTLANLQYNGSTPADAFETKVTNIIDRLNNNGIHINNKVACQLIMRGLSGEYKFLRYTRHRHLNMTVAELFLDIHAIYEEQQGSRNSKPNYRRNPSDEKNDSRSYTNTTKPKVIARNPQKTNNSKSKTARAHNVSTSNNSPSTDNDSISKSTTEPIQLNNKHDLHLGQKLTESTVNHTNHSDDELPGHLLLDSGASRTLIRSAHHIHSASSNPDINVVDAQKRNIPINAIGDLQFHFQDNTKTSIKVLHTPNIAYDLLSLNELAAVDITACFTKNVLERSDGTVLAPIVKYGDFYWVSKKYLLPSNISVPTINNVHTSESTRKYPYPFIHRMLAHANAQTIRYSLKNNTITYFNESDVDWSSAIDYQCPDCLIGKSTKHRHIKGSRLKYQNSYEPFQYLHTDIFGPVHNLPNSAPSYFISFTDETTKFRWVYPLHDRREDSILDVFTTILAFIKNQFQASVLVIQMDRGSEYTNRTLHKFLEKNGITPCYTTTADSRAHGVAERLNRTLLDDCRTQLQCSGLPNHLWFSAIEFSTIVRNSLASPKSKKSARQHAGLAGLDISTLLPFGQPVIVNDHNPNSKIHPRGIPGYALHPSRNSYGYIIYLPSLKKTVDTTNYVILQGKESRLDQFNYDALTFDEDLNRLTASYHSFIASNEIQESNDLNIESDHDFQSDIELHPEQPRNVLSKAVSPTDSTPPSTHTEDSKRVSKTNIRAPREVDPNISESNILPSKKRSSTPQISNIESTGSGGMHKLNVPLLAPMSQSNTHESSHASKSKDFRHSDSYSENETNHTNVPISSTGGTNNKTVPQISDQETEKRIIHRSPSIDASPPENNSSHNIVPIKTPTTVSEQNTEESIIADLPLPDLPPESPTEFPDPFKELPPINSRQTNSSLGGIGDSNAYTTINSKKRSLEDNETEIKVSRDTWNTKNMRSLEPPRSKKRIHLIAAVKAVKSIKPIRTTLRYDEAITYNKDIKEKEKYIEAYHKEVNQLLKMKTWDTDEYYDRKEIDPKRVINSMFIFNKKRDGTHKARFVARGDIQHPDTYDSGMQSNTVHHYALMTSLSLALDNNYYITQLDISSAYLYADIKEELYIRPPPHLGMNDKLIRLKKSLYGLKQSGANWYETIKSYLIQQCGMEEVRGWSCVFKNSQVTICLFVDDMVLFSKNLNSNKRIIEKLKMQYDTKIINLGESDEEIQYDILGLEIKYQRGKYMKLGMENSLTEKIPKLNVPLNPKGRKLSAPGQPGLYIDQDELEIDEDEYKEKVHEMQKLIGLASYVGYKFRFDLLYYINTLAQHILFPSRQVLDMTYELIQFMWDTRDKQLIWHKHKTSSDKNI.

Composition is skewed to polar residues over residues 1 to 23, 48 to 60, and 127 to 152; these read MESQ…SVTS, TKAN…TPAS, and QSQF…GNTF. Disordered regions lie at residues 1-93, 126-174, and 352-421; these read MESQ…MMTQ, PQSQ…PPPM, and GSRN…SKST. Low complexity predominate over residues 153–165; it reads TDSSSADSDMTST. The RNA-binding stretch occupies residues 299-401; that stretch reads NNGIHINNKV…NSKSKTARAH (103 aa). Over residues 402–418 the composition is skewed to low complexity; that stretch reads NVSTSNNSPSTDNDSIS. Ser-416 is subject to Phosphoserine. Asp-461 serves as the catalytic For protease activity; shared with dimeric partner. The integrase-type zinc finger-like stretch occupies residues 583–640; it reads NVHTSESTRKYPYPFIHRMLAHANAQTIRYSLKNNTITYFNESDVDWSSAIDYQCPDC. Residues 660–835 form the Integrase catalytic domain; the sequence is NSYEPFQYLH…AGLDISTLLP (176 aa). Residues Asp-671 and Asp-736 each contribute to the Mg(2+) site. 3 disordered regions span residues 956 to 1087, 1092 to 1111, and 1130 to 1187; these read SKAV…ETEK, RSPS…NIVP, and DLPL…DNET. Positions 960-969 are enriched in low complexity; it reads SPTDSTPPST. The span at 1005-1015 shows a compositional bias: polar residues; the sequence is STPQISNIEST. The segment covering 1038-1053 has biased composition (basic and acidic residues); that stretch reads ESSHASKSKDFRHSDS. Composition is skewed to polar residues over residues 1054–1082 and 1101–1111; these read YSEN…QISD and PENNSSHNIVP. The short motif at 1178–1212 is the Bipartite nuclear localization signal element; that stretch reads KKRSLEDNETEIKVSRDTWNTKNMRSLEPPRSKKR. Residues 1338–1476 enclose the Reverse transcriptase Ty1/copia-type domain; that stretch reads NNYYITQLDI…DILGLEIKYQ (139 aa). 3 residues coordinate Mg(2+): Asp-1346, Asp-1427, and Asp-1428.

In terms of assembly, the capsid protein forms a homotrimer, from which the VLPs are assembled. The protease is a homodimer, whose active site consists of two apposed aspartic acid residues. Initially, virus-like particles (VLPs) are composed of the structural unprocessed proteins Gag and Gag-Pol, and also contain the host initiator methionine tRNA (tRNA(i)-Met) which serves as a primer for minus-strand DNA synthesis, and a dimer of genomic Ty RNA. Processing of the polyproteins occurs within the particle and proceeds by an ordered pathway, called maturation. First, the protease (PR) is released by autocatalytic cleavage of the Gag-Pol polyprotein yielding capsid protein p45 and a Pol-p154 precursor protein. This cleavage is a prerequisite for subsequent processing of Pol-p154 at the remaining sites to release the mature structural and catalytic proteins. Maturation takes place prior to the RT reaction and is required to produce transposition-competent VLPs.

Its subcellular location is the cytoplasm. The protein resides in the nucleus. It carries out the reaction DNA(n) + a 2'-deoxyribonucleoside 5'-triphosphate = DNA(n+1) + diphosphate. The enzyme catalyses Endonucleolytic cleavage to 5'-phosphomonoester.. Its function is as follows. Capsid protein (CA) is the structural component of the virus-like particle (VLP), forming the shell that encapsulates the retrotransposons dimeric RNA genome. The particles are assembled from trimer-clustered units and there are holes in the capsid shells that allow for the diffusion of macromolecules. CA also has nucleocapsid-like chaperone activity, promoting primer tRNA(i)-Met annealing to the multipartite primer-binding site (PBS), dimerization of Ty1 RNA and initiation of reverse transcription. The aspartyl protease (PR) mediates the proteolytic cleavages of the Gag and Gag-Pol polyproteins after assembly of the VLP. Functionally, reverse transcriptase/ribonuclease H (RT) is a multifunctional enzyme that catalyzes the conversion of the retro-elements RNA genome into dsDNA within the VLP. The enzyme displays a DNA polymerase activity that can copy either DNA or RNA templates, and a ribonuclease H (RNase H) activity that cleaves the RNA strand of RNA-DNA heteroduplexes during plus-strand synthesis and hydrolyzes RNA primers. The conversion leads to a linear dsDNA copy of the retrotransposon that includes long terminal repeats (LTRs) at both ends. In terms of biological role, integrase (IN) targets the VLP to the nucleus, where a subparticle preintegration complex (PIC) containing at least integrase and the newly synthesized dsDNA copy of the retrotransposon must transit the nuclear membrane. Once in the nucleus, integrase performs the integration of the dsDNA into the host genome. The sequence is that of Transposon Ty1-DR4 Gag-Pol polyprotein (TY1B-DR4) from Saccharomyces cerevisiae (strain ATCC 204508 / S288c) (Baker's yeast).